Consider the following 185-residue polypeptide: Ribosome-recycling factor (185 aa).

Belongs to the RRF family.

The protein resides in the cytoplasm. Responsible for the release of ribosomes from messenger RNA at the termination of protein biosynthesis. May increase the efficiency of translation by recycling ribosomes from one round of translation to another. In Tolumonas auensis (strain DSM 9187 / NBRC 110442 / TA 4), this protein is Ribosome-recycling factor.